The following is a 677-amino-acid chain: DNA ligase (677 aa).

NAD(+)-binding positions include 38 to 42 (DYDFD), 87 to 88 (SL), and E121. The N6-AMP-lysine intermediate role is filled by K123. Residues R144, E187, K300, and K324 each contribute to the NAD(+) site. Zn(2+)-binding residues include C418, C421, C436, and C442. Residues 601 to 677 (LINSNFEGLS…ISEEEFEAML (77 aa)) form the BRCT domain.

Belongs to the NAD-dependent DNA ligase family. LigA subfamily. It depends on Mg(2+) as a cofactor. Mn(2+) is required as a cofactor.

It catalyses the reaction NAD(+) + (deoxyribonucleotide)n-3'-hydroxyl + 5'-phospho-(deoxyribonucleotide)m = (deoxyribonucleotide)n+m + AMP + beta-nicotinamide D-nucleotide.. In terms of biological role, DNA ligase that catalyzes the formation of phosphodiester linkages between 5'-phosphoryl and 3'-hydroxyl groups in double-stranded DNA using NAD as a coenzyme and as the energy source for the reaction. It is essential for DNA replication and repair of damaged DNA. In Chlorobium luteolum (strain DSM 273 / BCRC 81028 / 2530) (Pelodictyon luteolum), this protein is DNA ligase.